The chain runs to 323 residues: Elongation factor P--(R)-beta-lysine ligase (323 aa).

Position 74 to 76 (74 to 76) interacts with substrate; the sequence is SPE. Residues 98-100 and Asn107 each bind ATP; that span reads RNE. Tyr116 lines the substrate pocket. 242–243 contributes to the ATP binding site; the sequence is EL. A substrate-binding site is contributed by Glu249. Gly298 contacts ATP.

Belongs to the class-II aminoacyl-tRNA synthetase family. EpmA subfamily. Homodimer.

It catalyses the reaction D-beta-lysine + L-lysyl-[protein] + ATP = N(6)-((3R)-3,6-diaminohexanoyl)-L-lysyl-[protein] + AMP + diphosphate + H(+). Functionally, with EpmB is involved in the beta-lysylation step of the post-translational modification of translation elongation factor P (EF-P). Catalyzes the ATP-dependent activation of (R)-beta-lysine produced by EpmB, forming a lysyl-adenylate, from which the beta-lysyl moiety is then transferred to the epsilon-amino group of a conserved specific lysine residue in EF-P. In Photobacterium profundum (strain SS9), this protein is Elongation factor P--(R)-beta-lysine ligase.